A 210-amino-acid chain; its full sequence is Probable GTP-binding protein EngB (210 aa).

Positions 25-199 (TGIEVAFAGR…RQKLDTWFSE (175 aa)) constitute an EngB-type G domain. Residues 33 to 40 (GRSNAGKS), 60 to 64 (GRTQL), 78 to 81 (DLPG), 145 to 148 (TKAD), and 178 to 180 (FSS) contribute to the GTP site. The Mg(2+) site is built by serine 40 and threonine 62.

This sequence belongs to the TRAFAC class TrmE-Era-EngA-EngB-Septin-like GTPase superfamily. EngB GTPase family. Mg(2+) serves as cofactor.

In terms of biological role, necessary for normal cell division and for the maintenance of normal septation. In Shigella flexneri, this protein is Probable GTP-binding protein EngB.